The chain runs to 124 residues: Chemotaxis protein CheY1 (124 aa).

One can recognise a Response regulatory domain in the interval 2 to 120 (KLLVVDDSST…VLKEKLEVVL (119 aa)). Aspartate 7, aspartate 8, aspartate 53, and asparagine 55 together coordinate Mg(2+). The residue at position 53 (aspartate 53) is a 4-aspartylphosphate.

As to quaternary structure, interacts (when phosphorylated) with FliM. Mg(2+) serves as cofactor. Post-translationally, phosphorylated by CheAY. Dephosphorylated (inactivated) by CheZ.

It localises to the cytoplasm. Chemotactic response regulator protein that modulates the rotation direction of bacterial flagellar motors. Plays an important role in the colonization and infection of Helicobacter pylori. Upon phosphorylation by CheA, interacts with the flagellar motor protein FliM to cause clockwise flagellar rotation and bacterial reversals, as opposed to straight swimming when CheY1 is not phosphorylated. This Helicobacter pylori (strain ATCC 700392 / 26695) (Campylobacter pylori) protein is Chemotaxis protein CheY1.